Consider the following 300-residue polypeptide: Tyrosine recombinase XerC (300 aa).

A Core-binding (CB) domain is found at 1 to 86; that stretch reads MESVLDAFDQ…AVKTFTAWAV (86 aa). Residues 107–294 enclose the Tyr recombinase domain; sequence TLPAVLRQDQ…TVARLRAVHD (188 aa). Active-site residues include Arg151, Lys175, His246, Arg249, and His272. Tyr281 serves as the catalytic O-(3'-phospho-DNA)-tyrosine intermediate.

This sequence belongs to the 'phage' integrase family. XerC subfamily. In terms of assembly, forms a cyclic heterotetrameric complex composed of two molecules of XerC and two molecules of XerD.

The protein localises to the cytoplasm. Its function is as follows. Site-specific tyrosine recombinase, which acts by catalyzing the cutting and rejoining of the recombining DNA molecules. The XerC-XerD complex is essential to convert dimers of the bacterial chromosome into monomers to permit their segregation at cell division. It also contributes to the segregational stability of plasmids. The protein is Tyrosine recombinase XerC of Mycobacterium sp. (strain KMS).